The sequence spans 87 residues: Omega-lycotoxin-Am1d (87 aa).

The first 17 residues, 1-17 (MKLSIFFVLFFIAIAYC), serve as a signal peptide directing secretion. Positions 18–40 (QPEFLDDEEDEVEETLPVAEEGR) are excised as a propeptide. 4 disulfides stabilise this stretch: Cys44–Cys59, Cys51–Cys64, Cys58–Cys84, and Cys66–Cys82.

The protein belongs to the neurotoxin omega-lctx family. In terms of tissue distribution, expressed by the venom gland.

It is found in the secreted. Its function is as follows. Modulates Cav2.1/CACNA1A voltage-gated calcium channels (P/Q-type currents) in rat cerebellar Purkinje cells and hippocampal CA1-CA3 neurons. At saturating concentrations (&gt;10 nM) decelerates activation kinetics and slightly increases peak amplitude without affecting deactivation kinetics. In vivo, does not cause death when intravenously injected into mice. In rat models, through its activity on Cav2.1/CACNA1A, has an ameliorative effect on memory defects provoked by hyperstimulation of N-methyl-D-aspartate receptors (NMDARs) in the hippocampus. In Alopecosa marikovskyi (Wolf spider), this protein is Omega-lycotoxin-Am1d.